The following is a 252-amino-acid chain: Imidazole glycerol phosphate synthase subunit HisF (252 aa).

Active-site residues include D11 and D130.

It belongs to the HisA/HisF family. As to quaternary structure, heterodimer of HisH and HisF.

Its subcellular location is the cytoplasm. The enzyme catalyses 5-[(5-phospho-1-deoxy-D-ribulos-1-ylimino)methylamino]-1-(5-phospho-beta-D-ribosyl)imidazole-4-carboxamide + L-glutamine = D-erythro-1-(imidazol-4-yl)glycerol 3-phosphate + 5-amino-1-(5-phospho-beta-D-ribosyl)imidazole-4-carboxamide + L-glutamate + H(+). It functions in the pathway amino-acid biosynthesis; L-histidine biosynthesis; L-histidine from 5-phospho-alpha-D-ribose 1-diphosphate: step 5/9. IGPS catalyzes the conversion of PRFAR and glutamine to IGP, AICAR and glutamate. The HisF subunit catalyzes the cyclization activity that produces IGP and AICAR from PRFAR using the ammonia provided by the HisH subunit. The polypeptide is Imidazole glycerol phosphate synthase subunit HisF (Sulfurihydrogenibium sp. (strain YO3AOP1)).